The sequence spans 637 residues: Threonine--tRNA ligase (637 aa).

In terms of domain architecture, TGS spans 1 to 61 (MITITLPDSS…ATDAAVRLIT (61 aa)). A catalytic region spans residues 238 to 528 (DHRKLGAELD…LIEHFAGKFP (291 aa)). Zn(2+)-binding residues include Cys329, His380, and His505.

This sequence belongs to the class-II aminoacyl-tRNA synthetase family. In terms of assembly, homodimer. It depends on Zn(2+) as a cofactor.

The protein resides in the cytoplasm. The catalysed reaction is tRNA(Thr) + L-threonine + ATP = L-threonyl-tRNA(Thr) + AMP + diphosphate + H(+). In terms of biological role, catalyzes the attachment of threonine to tRNA(Thr) in a two-step reaction: L-threonine is first activated by ATP to form Thr-AMP and then transferred to the acceptor end of tRNA(Thr). Also edits incorrectly charged L-seryl-tRNA(Thr). This chain is Threonine--tRNA ligase, found in Desulfosudis oleivorans (strain DSM 6200 / JCM 39069 / Hxd3) (Desulfococcus oleovorans).